A 445-amino-acid chain; its full sequence is UDP-N-acetylglucosamine--peptide N-acetylglucosaminyltransferase stabilizing protein GtfB (445 aa).

A glycosyltransferase 1 region spans residues 55–171; sequence KPLYFNQVPV…TLPGQSMRYF (117 aa).

Belongs to the GtfB family. In terms of assembly, interacts with glycosyltransferase GtfA; probably forms a heterotetramer with 2 subunits each of GtfA and GtfB. Part of the accessory SecA2/SecY2 protein translocation apparatus.

The protein localises to the cell membrane. Its pathway is protein modification; protein glycosylation. Its function is as follows. Required for the polymorphic O-glycosylation of the serine-rich repeat protein PsrP. A stabilizing protein that is part of the accessory SecA2/SecY2 system specifically required to export serine-rich repeat cell wall proteins encoded upstream in the same operon. The GtfA-GtfB complex adds GlcNAc from UDP-GlcNAc to PsrP, attaching the first sugar residue. Stabilizes the glycosylation activity of GtfA. Has no N-acetylglucosaminyl transferase activity on its own. In Streptococcus pneumoniae serotype 4 (strain ATCC BAA-334 / TIGR4), this protein is UDP-N-acetylglucosamine--peptide N-acetylglucosaminyltransferase stabilizing protein GtfB.